We begin with the raw amino-acid sequence, 896 residues long: Desmocollin-3 (896 aa).

The signal sequence occupies residues 1–26 (MAAPGSGAPCAELCRQLLLTLVVFSF). A propeptide spanning residues 27 to 134 (ACEACKKEIF…KETVLRRSKR (108 aa)) is cleaved from the precursor. Cadherin domains are found at residues 135–242 (RWAP…HPIF), 243–354 (TEAV…LPTF), 355–471 (RQNA…GPEC), 472–579 (SPEV…EILQ), and 580–690 (DYLV…ILGK). The Extracellular segment spans residues 135 to 690 (RWAPIPCSMQ…RRSADVILGK (556 aa)). N-linked (GlcNAc...) asparagine glycosylation occurs at Asn165. Asn391, Asn546, and Asn629 each carry an N-linked (GlcNAc...) asparagine glycan. Residues 691–711 (WAILAILLGIALLFSILLTLV) traverse the membrane as a helical segment. The Cytoplasmic segment spans residues 712–896 (CGIVSARNKK…AALAKTCTKR (185 aa)).

May form homodimers. Interacts with DSG1; there is evidence to suggest that the interaction promotes cell-cell adhesion of keratinocytes. As to expression, expressed in stratified epithelia only, such as the epidermis, tongue, esophagus and rumen (at protein level).

It localises to the cell membrane. The protein resides in the cell junction. Its subcellular location is the desmosome. It is found in the cytoplasm. In terms of biological role, a component of desmosome cell-cell junctions which are required for positive regulation of cellular adhesion. Required for cell-cell adhesion in the epidermis, as a result required for the maintenance of the dermal cohesion and the dermal barrier function. Required for cell-cell adhesion of epithelial cell layers surrounding the telogen hair club, as a result plays an important role in telogen hair shaft anchorage. Essential for successful completion of embryo compaction and embryo development. The chain is Desmocollin-3 (DSC3) from Bos taurus (Bovine).